A 331-amino-acid polypeptide reads, in one-letter code: Ketol-acid reductoisomerase (NADP(+)) (331 aa).

In terms of domain architecture, KARI N-terminal Rossmann spans 2-182 (AKMYYDQDAD…GGTKAGAIET (181 aa)). NADP(+)-binding positions include 25–28 (FGSQ), Ser-51, Ser-53, and 83–86 (DEKQ). Residue His-108 is part of the active site. Gly-134 serves as a coordination point for NADP(+). The region spanning 183 to 328 (TFKEETETDL…KSLREMMPWL (146 aa)) is the KARI C-terminal knotted domain. The Mg(2+) site is built by Asp-191, Glu-195, Glu-227, and Glu-231. Ser-252 is a binding site for substrate.

The protein belongs to the ketol-acid reductoisomerase family. Mg(2+) serves as cofactor.

The enzyme catalyses (2R)-2,3-dihydroxy-3-methylbutanoate + NADP(+) = (2S)-2-acetolactate + NADPH + H(+). It carries out the reaction (2R,3R)-2,3-dihydroxy-3-methylpentanoate + NADP(+) = (S)-2-ethyl-2-hydroxy-3-oxobutanoate + NADPH + H(+). The protein operates within amino-acid biosynthesis; L-isoleucine biosynthesis; L-isoleucine from 2-oxobutanoate: step 2/4. Its pathway is amino-acid biosynthesis; L-valine biosynthesis; L-valine from pyruvate: step 2/4. In terms of biological role, involved in the biosynthesis of branched-chain amino acids (BCAA). Catalyzes an alkyl-migration followed by a ketol-acid reduction of (S)-2-acetolactate (S2AL) to yield (R)-2,3-dihydroxy-isovalerate. In the isomerase reaction, S2AL is rearranged via a Mg-dependent methyl migration to produce 3-hydroxy-3-methyl-2-ketobutyrate (HMKB). In the reductase reaction, this 2-ketoacid undergoes a metal-dependent reduction by NADPH to yield (R)-2,3-dihydroxy-isovalerate. The polypeptide is Ketol-acid reductoisomerase (NADP(+)) (Caldanaerobacter subterraneus subsp. tengcongensis (strain DSM 15242 / JCM 11007 / NBRC 100824 / MB4) (Thermoanaerobacter tengcongensis)).